The sequence spans 455 residues: GTPase Der (455 aa).

EngA-type G domains are found at residues 4–169 (PVVA…PPKD) and 178–353 (IQMA…EQHR). GTP is bound by residues 10 to 17 (GRPNVGKS), 57 to 61 (DTGGL), 120 to 123 (NKCE), 184 to 191 (GRPNVGKS), 231 to 235 (DTAGI), and 296 to 299 (NKWD). One can recognise a KH-like domain in the interval 354-439 (RRVSTSVVNE…PVKLYWRGKQ (86 aa)).

It belongs to the TRAFAC class TrmE-Era-EngA-EngB-Septin-like GTPase superfamily. EngA (Der) GTPase family. Associates with the 50S ribosomal subunit.

Its function is as follows. GTPase that plays an essential role in the late steps of ribosome biogenesis. The protein is GTPase Der of Parasynechococcus marenigrum (strain WH8102).